The primary structure comprises 575 residues: E3 ubiquitin-protein ligase kcmf-1 (575 aa).

The ZZ-type zinc-finger motif lies at 9–73 (HEGVSCDGCA…PMQLILSSVD (65 aa)). The Zn(2+) site is built by Cys14, Cys17, Cys29, Cys32, Cys38, Cys41, His59, and His63. 2 disordered regions span residues 277 to 306 (PIYP…DDND) and 530 to 575 (EADE…INID). 2 stretches are compositionally biased toward acidic residues: residues 297-306 (SADESEDDND) and 530-563 (EADE…ENDS).

This sequence belongs to the KCMF1 family.

Its subcellular location is the cytoplasm. The protein localises to the late endosome. It localises to the lysosome. The catalysed reaction is S-ubiquitinyl-[E2 ubiquitin-conjugating enzyme]-L-cysteine + [acceptor protein]-L-lysine = [E2 ubiquitin-conjugating enzyme]-L-cysteine + N(6)-ubiquitinyl-[acceptor protein]-L-lysine.. Its pathway is protein modification; protein ubiquitination. Functionally, E3 ubiquitin-protein ligase which accepts ubiquitin from an E2 ubiquitin-conjugating enzyme and then transfers it to targeted substrates, promoting their degradation by the proteasome. The sequence is that of E3 ubiquitin-protein ligase kcmf-1 from Caenorhabditis elegans.